A 1997-amino-acid chain; its full sequence is MSTEDEKLLKEAKKLPWDERLQHKNWKVRNDANIDLAALCDSITDPKDARLREFGPLFKKTVADSNAPVQEKALDALLAFQRAADADASRYAKEVCDAIVAKCLTGRPKTVEKAQAAFLLWVELEAAEVFLESMEKAVKNKVAKAVVPAIDVMFQALSEFGAKVVPPKKILKMLPELFDHPDQNVRASSKGLTLELCRWIGKEPVKAILFEKMRDTMKKELEAELANVSGIAKPTRKIRSEQEKELEEEVVPEAAGTNNSEEAVPEAPMEIDEYDLVDPVDILTPLEKSGFWDGVKATKWSERRDAVAELTKLASTKKIAPGDFHEICRTLKKLITDVNLAVSVEATQAIGNLAKGLRTHFSGNSRVLLPVLLEKLKEKKPTMTEALSQTLQAMHKSGCITLLDVIEDVRVAVKNKVPLVRSLTLNWVAFCIETSNKATVLKLHKEYVPICMECLNDGTPEVRDASFSVLTAIAKMVGMKPLERSLEKLDDVRKKKLSDMIGSASDTTSGTVAASNTGVGTSAREVMDSSSMRRSAASMLSGKKPVQAVPATKKSGPAKSATAKKTDGGPQSKASAAPVIEDVEPSEMSLEEIEEKLSSVVKSETISQLKSTVWKERLEAISMLKQEVESLTELDKSAELLVRLLCAVPGWSEKNVQVQQQVIEVSTYIASTVNRFPKRCVVLCLLGISERVADIKTRGHAMKCLTAFCEAVGPGFVFERLYKIMKEHKNPKVLSEGILWMVSAVEDFGISNLKLKDTIDFCKDIGLQSSAAATRNATIKLIGVLHKFVGPDIKGFLSDVKPALLSTLDAEYEKNPFEGTASAPKRTVRAADAVSSASSGTSDGLPREDISAKITPTLLKNLGSPDWKLRLESIDAVSKIVEEAHKRIQPTGTVELFTALRARLYDSNKNLVMATLSTIGGLASAMGPAVEKSSKGILADVLKCLGDNKKHMRECTLTALDLWVAAAQLDKMVPYITVTLGDQKTGSEGRKDLFDWLSKHASNMSDPSEALPLLKPSASSLMDKSSEVRKAAESFMNEILKICGQDVVAKNLKDLPSPTLAIVAERLKLSTVHEGFSDSVKMVTTSMSLPSKAGSKNNKHGPNDRGSNVSKAVSQRGIPARSSVTMISSQDSIQSQALFNIKDSNKEERERRVLVRKFKFEEPRREQIDELKIELFRHFREDVSLRLWNSDFKRQIDGIELLQKALPSSRKEVIELLDILLRWFVLRFCESNTTCLLKVLDFLPELFDVLKDQSYMLTEAEAAIFLPCLMEKSGHNIEKVREKMGELIKQMVNIYSLPKLLPYILEGLRSKNNRTRIECVDIIGYFMDHHGTEVSGLLKNLPSVAALTAERDGEIRKAALNTLATAYKNLGDDVWRYVGKLSDAQRSMLDDRFKWKAREMDKRREGRPGDARAALRRSVRENGSDIAEQSGEAVSRSMAGSMISRENFGYSDAHMVPRQMATATPGPADWREALDIVALGLPEQSVEGMKVICHELTQAVDPESSVLDDLIKEADRLVSCLAVMVPKTFNFSLSGASSRSCKYVLNTLMQTFQIKRLAHAVKEGTLDNLITELLLWLLDERVPLMDDGSQLLKALNVLMLKILDNAERTSSFVVLINLLRPLDPSRWPSPTPPESLAVKNQKFSDLVVKCLIKLTKVLQSTIYEVDLDRILQSIHIYLQELGMEEIRRRAGADDKPLRMVKTVLHELVKLRGTAIKGHLSMVPIDAEPQPIILAYIDLNLQTLAAARMLTPSGTMGQTHWGDAGSNNPNPSTHSTDAQLKQELAAVFKKIGDKQTCTIGLYELYRITQLYPKVDIFAQLQNASEAFRTYIRDGLAQVEKNAAAGRTPSSLPLSTPPPIAPIPSPKFAPSPVHTKSINNKTDCNEDDAGGDTHPFRGQGEIDNRLQTTNLQTDRYQSSGTLDALRERMKSIQAAAVGANFDGVQARPLPSMNGNTLHGGTRLDADPQTQNIIPPMDERALSGLQARMERLKSGSMEPL.

HEAT repeat units lie at residues 48–86 and 164–202; these read DARL…AADA and VVPP…WIGK. The interval 236 to 264 is disordered; it reads RKIRSEQEKELEEEVVPEAAGTNNSEEAV. HEAT repeat units follow at residues 321–359, 362–400, and 441–479; these read PGDF…GLRT, SGNS…SGCI, and LKLH…MVGM. The segment at 501–576 is disordered; sequence IGSASDTTSG…DGGPQSKASA (76 aa). Residues 504 to 520 show a composition bias toward polar residues; that stretch reads ASDTTSGTVAASNTGVG. The span at 529–539 shows a compositional bias: low complexity; sequence SSSMRRSAASM. HEAT repeat units follow at residues 848 to 886, 890 to 928, 931 to 969, and 1007 to 1045; these read EDIS…EAHK, PTGT…AMGP, EKSS…AAQL, and PSEA…ICGQ. Positions 1087–1115 are disordered; the sequence is MSLPSKAGSKNNKHGPNDRGSNVSKAVSQ. 4 HEAT repeats span residues 1233-1259, 1260-1294, 1295-1332, and 1334-1372; these read TTCL…MLTE, AEAA…MVNI, YSLP…HHGT, and VSGL…NLGD. Basic and acidic residues predominate over residues 1400–1410; the sequence is MDKRREGRPGD. Residues 1400 to 1436 are disordered; that stretch reads MDKRREGRPGDARAALRRSVRENGSDIAEQSGEAVSR. An HEAT 14 repeat occupies 1539–1579; the sequence is RSCKYVLNTLMQTFQIKRLAHAVKEGTLDNLITELLLWLLD. Positions 1755–1776 are disordered; it reads MGQTHWGDAGSNNPNPSTHSTD. Polar residues predominate over residues 1764–1776; it reads GSNNPNPSTHSTD.

This sequence belongs to the TOG/XMAP215 family.

The protein resides in the cytoplasm. It localises to the cytoskeleton. Functionally, microtubule-associated protein that is essential for cortical microtubules organization and function. This Oryza sativa subsp. japonica (Rice) protein is Protein MOR1 (MOR1).